We begin with the raw amino-acid sequence, 289 residues long: tRNA (adenine(58)-N(1))-methyltransferase catalytic subunit TRMT61A (289 aa).

The residue at position 2 (Ser2) is an N-acetylserine. Substrate is bound by residues 20-22 (LGH), 35-42 (QTQTRHGV), 64-65 (GW), 85-89 (QILYS), and 110-117 (SGTGSGSV). S-adenosyl-L-methionine-binding positions include Leu87, 114-116 (SGS), Glu135, Arg140, 163-164 (DV), and Asp181. Residues 180-183 (LDIP) and 205-212 (SFSPCIEQ) each bind substrate. The segment at 245–272 (LPPPDLGTGTDGPAGSDTSPFRSGTPMK) is disordered. A compositionally biased stretch (low complexity) spans 250 to 259 (LGTGTDGPAG). A Phosphoserine modification is found at Ser263. Residue Thr278 coordinates substrate.

Belongs to the class I-like SAM-binding methyltransferase superfamily. TRM61 family. As to quaternary structure, heterotetramer; composed of two copies of TRMT6 and two copies of TRMT61A.

Its subcellular location is the nucleus. It carries out the reaction adenosine(58) in tRNA + S-adenosyl-L-methionine = N(1)-methyladenosine(58) in tRNA + S-adenosyl-L-homocysteine + H(+). The catalysed reaction is an adenosine in mRNA + S-adenosyl-L-methionine = an N(1)-methyladenosine in mRNA + S-adenosyl-L-homocysteine + H(+). Catalytic subunit of tRNA (adenine-N(1)-)-methyltransferase, which catalyzes the formation of N(1)-methyladenine at position 58 (m1A58) in initiator methionyl-tRNA. Catalytic subunit of mRNA N(1)-methyltransferase complex, which mediates methylation of adenosine residues at the N(1) position of a small subset of mRNAs: N(1) methylation takes place in tRNA T-loop-like structures of mRNAs and is only present at low stoichiometries. The sequence is that of tRNA (adenine(58)-N(1))-methyltransferase catalytic subunit TRMT61A (TRMT61A) from Homo sapiens (Human).